We begin with the raw amino-acid sequence, 63 residues long: Bowman-birk type proteinase inhibitor 2 (63 aa).

7 disulfide bridges follow: C7–C61, C8–C23, C11–C57, C13–C21, C31–C38, C35–C50, and C40–C48.

The protein belongs to the Bowman-Birk serine protease inhibitor family. In terms of assembly, exists as a dimer in its native form.

Functionally, inhibits trypsin, chymotrypsin, plasmin and factor XIIa. Does not inhibit factor Xa, thrombin, human plasma kallikrein, porcine pancreatic kallikrein and human urinary kallikrein. In Amburana cearensis (Cerejeira), this protein is Bowman-birk type proteinase inhibitor 2.